The chain runs to 476 residues: UDP-N-acetylmuramate--L-alanine ligase (476 aa).

123–129 (GTHGKTT) contributes to the ATP binding site.

The protein belongs to the MurCDEF family.

It is found in the cytoplasm. It carries out the reaction UDP-N-acetyl-alpha-D-muramate + L-alanine + ATP = UDP-N-acetyl-alpha-D-muramoyl-L-alanine + ADP + phosphate + H(+). It functions in the pathway cell wall biogenesis; peptidoglycan biosynthesis. Its function is as follows. Cell wall formation. The polypeptide is UDP-N-acetylmuramate--L-alanine ligase (Nitrosococcus oceani (strain ATCC 19707 / BCRC 17464 / JCM 30415 / NCIMB 11848 / C-107)).